The sequence spans 254 residues: Flavin-dependent thymidylate synthase (254 aa).

In terms of domain architecture, ThyX spans 7–237 (LRVQLIARTE…PAVFADFEIY (231 aa)). FAD contacts are provided by residues Ser71, 95 to 97 (RHR), and Gln103. Residues 92–95 (ELIR), 103–107 (QLSQR), and Arg176 contribute to the dUMP site. The ThyX motif signature appears at 95–105 (RHRHFSYSQLS). Residues 192–194 (NYR) and His198 contribute to the FAD site. Arg203 is a dUMP binding site. Arg203 acts as the Involved in ionization of N3 of dUMP, leading to its activation in catalysis.

Belongs to the thymidylate synthase ThyX family. As to quaternary structure, homotetramer. It depends on FAD as a cofactor.

It catalyses the reaction dUMP + (6R)-5,10-methylene-5,6,7,8-tetrahydrofolate + NADPH + H(+) = dTMP + (6S)-5,6,7,8-tetrahydrofolate + NADP(+). Its pathway is pyrimidine metabolism; dTTP biosynthesis. Functionally, catalyzes the reductive methylation of 2'-deoxyuridine-5'-monophosphate (dUMP) to 2'-deoxythymidine-5'-monophosphate (dTMP) while utilizing 5,10-methylenetetrahydrofolate (mTHF) as the methyl donor, and NADPH and FADH(2) as the reductant. In Mycobacterium sp. (strain KMS), this protein is Flavin-dependent thymidylate synthase.